The primary structure comprises 421 residues: Ankyrin repeat and SOCS box protein 6 (421 aa).

6 ANK repeats span residues 67 to 97, 102 to 131, 136 to 166, 170 to 205, 226 to 255, and 260 to 289; these read EGVS…NLNF, TYYT…DINR, HESS…DVNA, HGKT…DVKA, GGDK…DPSE, and ESLT…AYNC. Residues 360 to 415 form the SOCS box domain; that stretch reads ALHFSLRQLESYPPPLKHLCRVAIRLYLQPWPVDVKVKALPLPDRLKWYLLSEHSG.

Belongs to the ankyrin SOCS box (ASB) family. As to quaternary structure, binds APS. Identified in a complex with ELOB and ELOC. Interacts with CUL5 and RNF7. Interacts with SQSTM1.

It is found in the cytoplasm. Its pathway is protein modification; protein ubiquitination. Functionally, probable substrate-recognition component of a SCF-like ECS (Elongin-Cullin-SOCS-box protein) E3 ubiquitin-protein ligase complex which mediates the ubiquitination and subsequent proteasomal degradation of target proteins. May play a role in the regulation of cell proliferation and autophagy by promoting the ubiquitination and degradation of SQSTM1. This Pongo abelii (Sumatran orangutan) protein is Ankyrin repeat and SOCS box protein 6 (ASB6).